The sequence spans 448 residues: Protein kinase C and casein kinase substrate in neurons protein 2 (448 aa).

One can recognise an F-BAR domain in the interval 11 to 282; sequence VEVSSDSFWE…NIKTADAVED (272 aa). Residues 25–274 are a coiled coil; sequence KRTVKRIDDG…NIYRELEQNI (250 aa). Positions 315 to 386 are disordered; that stretch reads SRREKKKASD…DTNPFDEDTS (72 aa). A compositionally biased stretch (polar residues) spans 329-358; the sequence is TGINQTGDQVSQPNKHSSVSSYEKNQSYPT. The short motif at 367 to 369 is the NPF1 element; sequence NPF. Residues 379-381 carry the NPF2 motif; that stretch reads NPF. The SH3 domain maps to 388–448; sequence VMEVRVRALY…YPANYVEPIQ (61 aa).

It belongs to the PACSIN family. Post-translationally, phosphorylated on serine residues. As to expression, detected in intestine, cardiac muscle, lung and brain (at protein level). Expressed in all tissues tested, including, gizzard, liver, cardiac muscle, skeletal muscle and skin.

It localises to the cytoplasm. It is found in the cytoskeleton. The protein localises to the cytoplasmic vesicle membrane. The protein resides in the cell projection. Its subcellular location is the ruffle membrane. It localises to the early endosome. It is found in the recycling endosome membrane. The protein localises to the cell membrane. The protein resides in the membrane. Its subcellular location is the caveola. It localises to the cell junction. It is found in the focal adhesion. Regulates the morphogenesis and endocytosis of caveolae. Lipid-binding protein that is able to promote the tubulation of the phosphatidic acid-containing membranes it preferentially binds. Plays a role in intracellular vesicle-mediated transport. Involved in the endocytosis of cell-surface receptors like the EGF receptor, contributing to its internalization in the absence of EGF stimulus. Essential for endothelial organization in sprouting angiogenesis, modulates CDH5-based junctions. Facilitates endothelial front-rear polarity during migration by recruiting EHD4 and MICALL1 to asymmetric adherens junctions between leader and follower cells. This is Protein kinase C and casein kinase substrate in neurons protein 2 (PACSIN2) from Gallus gallus (Chicken).